The chain runs to 208 residues: Glutathione S-transferase P (208 aa).

The GST N-terminal domain maps to 1–78 (MTLKLTYFDI…HLARLNGLNG (78 aa)). Residues Y7, W38, K42, 49-50 (QV), and 62-63 (QS) contribute to the glutathione site. Residues 80-202 (NETETTFIDM…NKRAAINPPV (123 aa)) enclose the GST C-terminal domain.

It belongs to the GST superfamily. Pi family. In terms of assembly, homodimer. In terms of tissue distribution, expressed in dopaminergic (DA) neuron (at protein levels).

It catalyses the reaction RX + glutathione = an S-substituted glutathione + a halide anion + H(+). In terms of biological role, conjugation of reduced glutathione to a wide number of exogenous and endogenous hydrophobic electrophiles. Prevents dopaminergic CEP neuron degeneration in response to Mn(2+). This is Glutathione S-transferase P (gst-1) from Caenorhabditis elegans.